The primary structure comprises 348 residues: MTKKIFATGATGYIGGDAIYALLSASPEYEVSCLVRSGAKATELVARHPSVRIVDGTLDDLELLEEAAANADIVCNFAHATHEPSVSALAKGLARRQRPGHGYLIHTMGSGTMIYDDVIQRRFGEHSDKVFNDVEGLPEVLAVPDFAKARGAENAVRDVGVKNPDRVRTAVVCTGSAYGPGRGLVEYRTSAIHELVRCTLSRGHALQVGAGKSAWRNVYIRDLSDVFVKLITHATNDEQDSDNTDESVWGGSGGYYFVENGEHVWGELARAISDEAVAQGLIQGGDIESIDAAEAASLAPMCNFFWGCNARVEGRRAARGLNWKPVGPPLVKELEVIVQKEAEKLGLS.

The protein belongs to the avfA family.

Its pathway is mycotoxin biosynthesis. Its function is as follows. Oxidase; part of the gene cluster that mediates the biosynthesis of UCS1025A, a member of the pyrrolizidinone family that acts as a strong telomerase inhibitor and displays potent antibacterial and antitumor properties. These compounds share a hemiaminal-containing pyrrolizidinone core fused with a gamma-lactone, giving a furopyrrolizidine that is connected to a decalin fragment. The polyketide synthase module (PKS) of the PKS-NRPS ucsA is responsible for the synthesis of the polyketide backbone via the condensation of an acetyl-CoA starter unit with 6 malonyl-CoA units. The downstream nonribosomal peptide synthetase (NRPS) module then amidates the carboxyl end of the polyketide with a 2S,3S-methylproline derived from L-isoleucine by the 2-oxoglutarate-dependent dioxygenase ucsF which converts L-isoleucine to (4S,5S)-4-methylpyrroline-5-carboxylate that is further converted to 2S,3S-methylproline by the pyrroline-5-carboxylate reductase ucsG. Reductive release of the completed aminoacyl polyketide from the assembly line can form the 3-pyrrolin-2-one structure via an intramolecular Knoevenagel reaction. Because ucsA lacks a designated enoylreductase (ER) domain, the required activity is provided the enoyl reductase ucsL. This keto acyclic precursor is the substrate of the Diels-Alderase ucsH, that catalyzes the Diels-Alder cycloaddition. Oxidation of the 3S-methyl group to a carboxylate by the cytochrome P450 monooxygenase ucsK allows an oxa-Michael cyclization that might involve the reductase/dehydrogenase ucsI and which furnishes the furopyrrolizidine. The oxidase ucsJ likely plays a critical role in stereoselective reduction of the C5-C6 double bond to afford the required R-configured carboxylate group. Further enolization and oxidation at C5 by an unidentified enzyme affords the last intermediate that can undergo oxa-Michael cyclization to yield UCS1025A. The sequence is that of Oxidase ucsJ from Acremonium sp.